We begin with the raw amino-acid sequence, 260 residues long: Small ribosomal subunit protein eS1 (260 aa).

The residue at position 2 (A2) is an N-acetylalanine; partial.

It belongs to the eukaryotic ribosomal protein eS1 family. Component of the small ribosomal subunit. Mature ribosomes consist of a small (40S) and a large (60S) subunit. The 40S subunit contains about 33 different proteins and 1 molecule of RNA (18S). The 60S subunit contains about 49 different proteins and 3 molecules of RNA (25S, 5.8S and 5S).

The protein resides in the cytoplasm. This is Small ribosomal subunit protein eS1 from Mycosarcoma maydis (Corn smut fungus).